A 391-amino-acid polypeptide reads, in one-letter code: Na(+)/H(+) antiporter NhaA (391 aa).

The next 11 membrane-spanning stretches (helical) occupy residues 14–34 (AGGI…NSPL), 59–79 (LIHW…GLEV), 95–115 (SLPT…YLIF), 124–144 (VGWA…MALL), 154–174 (VFLL…IAMF), 177–197 (TDLS…LVGL), 213–233 (LILW…GVII), 261–281 (FVIL…GMSL), 292–312 (IALG…FVAV), 331–351 (VAVM…LAFI), and 363–383 (LGIL…LSKV).

Belongs to the NhaA Na(+)/H(+) (TC 2.A.33) antiporter family.

Its subcellular location is the cell inner membrane. The enzyme catalyses Na(+)(in) + 2 H(+)(out) = Na(+)(out) + 2 H(+)(in). Na(+)/H(+) antiporter that extrudes sodium in exchange for external protons. The polypeptide is Na(+)/H(+) antiporter NhaA (Shewanella loihica (strain ATCC BAA-1088 / PV-4)).